Here is a 173-residue protein sequence, read N- to C-terminus: RNA polymerase sigma factor TcsR (173 aa).

Positions 122-169 (IKDLTQNEKNILRKIYLHGLRESEISRELNISRQAVNKTHLRALEKLK) are sigma-70 factor domain-4. The H-T-H motif DNA-binding region spans 143-162 (ESEISRELNISRQAVNKTHL).

The protein belongs to the sigma-70 factor family.

Sigma factors are initiation factors that promote the attachment of RNA polymerase to specific initiation sites and are then released. Transcriptional regulator specifically required to activate expression of the toxin gene locus, composed of tcsL and tcdE/utxA. This chain is RNA polymerase sigma factor TcsR, found in Paraclostridium sordellii (Clostridium sordellii).